The sequence spans 324 residues: 3-hydroxyisobutyrate dehydrogenase, mitochondrial (324 aa).

Residues 1-25 (MSLRVMSPAMLNAWSQTLVRAMSTQ) constitute a mitochondrion transit peptide. Residues 29-58 (KNIGFVGLGNMGANMASNLIKAGHKLHVFD), 92-93 (LP), and T121 each bind NAD(+). Residue K196 is part of the active site. Position 271 (K271) interacts with NAD(+).

Belongs to the HIBADH-related family. 3-hydroxyisobutyrate dehydrogenase subfamily.

The protein localises to the mitochondrion. The enzyme catalyses 3-hydroxy-2-methylpropanoate + NAD(+) = 2-methyl-3-oxopropanoate + NADH + H(+). The protein operates within amino-acid degradation; L-valine degradation. The polypeptide is 3-hydroxyisobutyrate dehydrogenase, mitochondrial (Drosophila melanogaster (Fruit fly)).